The following is a 724-amino-acid chain: Solute carrier organic anion transporter family member 4C1 (724 aa).

A disordered region spans residues 1-80 (MQGSKGVENP…PPGSQLSELE (80 aa)). Over 1-101 (MQGSKGVENP…QCLQRCNNPK (101 aa)) the chain is Cytoplasmic. Phosphoserine is present on residues S15 and S16. Position 19 is a phosphothreonine (T19). Phosphoserine is present on residues S24, S26, and S28. Positions 25 to 46 (ASPSQVEVSAVASRNQNGGSQP) are enriched in polar residues. A helical membrane pass occupies residues 102 to 122 (GFLLHYCLLALTQGIVVNGLV). Over 123 to 141 (NISISTIEKRYEMKSSLTG) the chain is Extracellular. A helical membrane pass occupies residues 142-162 (LISSSYDISFCVLSLFVSFFG). The Cytoplasmic segment spans residues 163-168 (ERGHKP). Residues 169-193 (RWLAFASFMIGLGALVFSLPHFFSG) form a helical membrane-spanning segment. At 194 to 218 (RYELGTIFEDTCLTRNSTRCASSTS) the chain is on the extracellular side. A helical transmembrane segment spans residues 219 to 249 (LLSNYFYVFVLGQLLLGTGGTPLYTLGTAFI). At 250–269 (DDSVPTHKSSLYIGIGYSMS) the chain is on the cytoplasmic side. Residues 270–290 (ILGPAIGYVLGGQLLTMYIDV) form a helical membrane-spanning segment. The Extracellular segment spans residues 291 to 306 (AMGQSSDLTEDDPRWL). The chain crosses the membrane as a helical span at residues 307 to 331 (GAWWIGFLLAWLFAWSLIMPFSCFP). Residues 332–376 (KHLPGTAKIQAGKTSQTHQNNSTSFQHMDENFGKSIKDFPTAVKN) are Cytoplasmic-facing. Residues 377-398 (LMRNTVFICLVLSTTSEALVTT) traverse the membrane as a helical segment. The Extracellular segment spans residues 399–418 (GFATFLPKFIENQFGLTSSF). Residues 419 to 442 (AATLGGAVLIPGAALGQILGGVLV) traverse the membrane as a helical segment. Residues 443–446 (SKFK) lie on the Cytoplasmic side of the membrane. A helical membrane pass occupies residues 447 to 470 (MKCKNTMKFALCTSGVALMLSFVF). Residues 471-580 (IYAKCENGPF…KTQCSNLPIF (110 aa)) lie on the Extracellular side of the membrane. One can recognise a Kazal-like domain in the interval 494–549 (GNLTAPCNANCNCLRSYYYPLCGSDGVQYFSPCFAGCLNSVSNRKPKAYYNCSCIE). 3 disulfides stabilise this stretch: C500–C530, C506–C526, and C515–C547. The helical transmembrane segment at 581-603 (LGIFFITVIFTFMAGTPITVSIL) threads the bilayer. At 604 to 612 (RCVNHRQRS) the chain is on the cytoplasmic side. The helical transmembrane segment at 613-638 (LALGVQFMLLRLLGTIPGPIIFGVTI) threads the bilayer. Topologically, residues 639–672 (DSTCVLWDINECGTKGACWIYDNIRMAHMLVAIS) are extracellular. Residues 673 to 690 (VTCKVITIFFNGLAIVLY) form a helical membrane-spanning segment. The Cytoplasmic segment spans residues 691–724 (KPPPPGTEVSFQSQNVVVSTITVEEDLNKIENEG).

The protein belongs to the organo anion transporter (TC 2.A.60) family. In terms of tissue distribution, predominantly expressed in kidney and lung but also weakly expressed in brain. Localizes primarily in the proximal straight tubules, the S3 fraction of the nephron.

Its subcellular location is the basolateral cell membrane. The protein resides in the apical cell membrane. The catalysed reaction is estrone 3-sulfate(out) = estrone 3-sulfate(in). It catalyses the reaction L-thyroxine(out) = L-thyroxine(in). The enzyme catalyses 3,3',5-triiodo-L-thyronine(out) = 3,3',5-triiodo-L-thyronine(in). It carries out the reaction chenodeoxycholate(out) = chenodeoxycholate(in). The catalysed reaction is glycocholate(out) = glycocholate(in). It catalyses the reaction L-homoarginine(in) = L-homoarginine(out). The enzyme catalyses L-arginine(in) = L-arginine(out). It carries out the reaction N(omega),N(omega)-dimethyl-L-arginine(out) = N(omega),N(omega)-dimethyl-L-arginine(in). In terms of biological role, mediates the transport of organic anions such as steroids (estrone 3-sulfate, chenodeoxycholate, glycocholate) and thyroid hormones (3,3',5-triiodo-L-thyronine (T3), L-thyroxine (T4)), in the kidney. Capable of transporting cAMP and pharmacological substances such as digoxin, ouabain and methotrexate. Transport is independent of sodium, chloride ion, and ATP. Transport activity is stimulated by an acidic extracellular environment due to increased substrate affinity to the transporter. The driving force for this transport activity is currently not known. The role of hydrogencarbonate (HCO3(-), bicarbonate) as the probable counteranion that exchanges for organic anions is still not well defined. Functions as an uptake transporter at the apical membrane, suggesting a role in renal reabsorption. Involved in the renal secretion of the uremic toxin ADMA (N(omega),N(omega)-dimethyl-L-arginine or asymmetrical dimethylarginine), which is associated to cardiovascular events and mortality, and the structurally related amino acids L-arginine and L-homoarginine (a cardioprotective biomarker). Can act bidirectionally, suggesting a dual protective role of this transport protein; exporting L-homoarginine after being synthesized in proximal tubule cells, and mediating uptake of ADMA from the blood into proximal tubule cells where it is degraded by the enzyme dimethylarginine dimethylaminohydrolase 1 (DDAH1). May be involved in sperm maturation by enabling directed movement of organic anions and compounds within or between cells. This ion-transporting process is important to maintain the strict epididymal homeostasis necessary for sperm maturation. May have a role in secretory functions since seminal vesicle epithelial cells are assumed to secrete proteins involved in decapacitation by modifying surface proteins to facilitate the acquisition of the ability to fertilize the egg. The chain is Solute carrier organic anion transporter family member 4C1 from Rattus norvegicus (Rat).